The primary structure comprises 618 residues: MSAILSADDLNDFISPGVACIKPVETLPAKSERDESAYEVTTEDKVAAENPSPAQISLTDCLACSGCVTSAEAVLISLQSHAEVLNTLDAYPELRVDGFRNGVQNGATGDARIFVASVSPQVRASMAATYGVSEKEAGYMIEQFLSGPQGLRAGGQHGSGFTWVVDTNVIRDVVLELTTDEVTASRAKFDSTATSESAEFPIPRQPILSSACPGWICYAEKTHPHVLPHLSRLKSPQALTGTFIKTILSKRLNVPPSRIWHLAIMPCFDKKLEASRQELTDASWQTTNHDIFASPAMDQPIRDVDCVITSRELLMLASSRNISLLTLPLTPLPSSFTTPFPDPRIAQFLFPKHHASNQSVSSGPSGGYLHHLLTTHQALHPNSTIQAQRGRNADVIDYTLVSAETGRPIIKAARYYGFRNIQNLVRKLKPAKTSRLPGARAAVSRRTGISASHTAAGGGVSDYAYIEVMACPGGCTNGGGQIRVEDARDTATIATSSIDGSAPTAQTSQHKPTPQEQRAWLARVDEVYYSADSDSHPPSSPSTSLGDEMEIDRPLEPESRSQSVHAILQYWSDMTGIPLPKLVYTTFRKVESDVGKSKNGAADTARVAELAGKIGGGW.

[4Fe-4S] cluster contacts are provided by C20, C61, C64, C67, C212, C267, C471, and C475. Disordered stretches follow at residues 495-516 (TSSIDGSAPTAQTSQHKPTPQE) and 530-560 (SADSDSHPPSSPSTSLGDEMEIDRPLEPESR).

It belongs to the NARF family.

Functionally, component of the cytosolic Fe/S protein assembly machinery. Required for maturation of extramitochondrial Fe/S proteins. May play a role in the transfer of pre-assembled Fe/S clusters to target apoproteins. The polypeptide is Cytosolic Fe-S cluster assembly factor NAR1 (NAR1) (Coccidioides immitis (strain RS) (Valley fever fungus)).